Reading from the N-terminus, the 573-residue chain is Proline--tRNA ligase (573 aa).

This sequence belongs to the class-II aminoacyl-tRNA synthetase family. ProS type 1 subfamily. In terms of assembly, homodimer.

It is found in the cytoplasm. The enzyme catalyses tRNA(Pro) + L-proline + ATP = L-prolyl-tRNA(Pro) + AMP + diphosphate. Its function is as follows. Catalyzes the attachment of proline to tRNA(Pro) in a two-step reaction: proline is first activated by ATP to form Pro-AMP and then transferred to the acceptor end of tRNA(Pro). As ProRS can inadvertently accommodate and process non-cognate amino acids such as alanine and cysteine, to avoid such errors it has two additional distinct editing activities against alanine. One activity is designated as 'pretransfer' editing and involves the tRNA(Pro)-independent hydrolysis of activated Ala-AMP. The other activity is designated 'posttransfer' editing and involves deacylation of mischarged Ala-tRNA(Pro). The misacylated Cys-tRNA(Pro) is not edited by ProRS. The chain is Proline--tRNA ligase from Methylobacillus flagellatus (strain ATCC 51484 / DSM 6875 / VKM B-1610 / KT).